Consider the following 64-residue polypeptide: Large ribosomal subunit protein bL33 (64 aa).

Basic and acidic residues predominate over residues 16-25 (EARTSSEPRR). Residues 16-41 (EARTSSEPRRSNGVSRYTTEKNKRNT) form a disordered region.

This sequence belongs to the bacterial ribosomal protein bL33 family.

The polypeptide is Large ribosomal subunit protein bL33 (Prochlorococcus marinus subsp. pastoris (strain CCMP1986 / NIES-2087 / MED4)).